A 448-amino-acid polypeptide reads, in one-letter code: MTATASPSDTKGAAAPRISFVSLGCPKALVDSERILTHLRAEGYELSRRHDGADVVIVNTCGFLDSAKAESLQAIGEAMAENGRVIVTGCMGAQPEEIREKYPNLLAVTGPQAYESVVAAVHEAVPPAHDPFLDLIPPQGVKLTPRHYAYLKISEGCNNRCTFCIIPSLRGDLVSRPAGDVLREAEKLVKAGVKELLVVSQDTSAYGIDTRYATSPWRDREVRARFYDLASELGELGAWVRLHYVYPYPHVDEVIPLMAEGKILPYLDMPLQHASPSVLKRMRRPGNQERQLDRIRRWREICPELAIRSTFIVGFPGETEAEFEELLDWIREARLERVGCFEYEPVKGAPANDLGLLVPPEVKAERKRRFMEAQAGVSLKLQRAKVGKRLQVIIDEAGPGGARGRSKADAPEIDGSVHVASRRPLRPGDIVTVKIERADAYDLHGIAV.

Residues 16–126 (PRISFVSLGC…VVAAVHEAVP (111 aa)) form the MTTase N-terminal domain. [4Fe-4S] cluster is bound by residues C25, C61, C90, C157, C161, and C164. One can recognise a Radical SAM core domain in the interval 143 to 380 (LTPRHYAYLK…MEAQAGVSLK (238 aa)). The 66-residue stretch at 383-448 (RAKVGKRLQV…DAYDLHGIAV (66 aa)) folds into the TRAM domain.

The protein belongs to the methylthiotransferase family. RimO subfamily. Requires [4Fe-4S] cluster as cofactor.

Its subcellular location is the cytoplasm. It catalyses the reaction L-aspartate(89)-[ribosomal protein uS12]-hydrogen + (sulfur carrier)-SH + AH2 + 2 S-adenosyl-L-methionine = 3-methylsulfanyl-L-aspartate(89)-[ribosomal protein uS12]-hydrogen + (sulfur carrier)-H + 5'-deoxyadenosine + L-methionine + A + S-adenosyl-L-homocysteine + 2 H(+). Catalyzes the methylthiolation of an aspartic acid residue of ribosomal protein uS12. The chain is Ribosomal protein uS12 methylthiotransferase RimO from Methylorubrum populi (strain ATCC BAA-705 / NCIMB 13946 / BJ001) (Methylobacterium populi).